We begin with the raw amino-acid sequence, 175 residues long: Secretion monitor (175 aa).

Residues methionine 1–alanine 38 form the signal peptide.

Belongs to the SecM family.

The protein resides in the cytoplasm. It is found in the cytosol. Its subcellular location is the periplasm. Functionally, regulates secA expression by translational coupling of the secM secA operon. Translational pausing at a specific Pro residue 5 residues before the end of the protein may allow disruption of a mRNA repressor helix that normally suppresses secA translation initiation. The protein is Secretion monitor of Proteus mirabilis (strain HI4320).